The primary structure comprises 280 residues: MNIFIRKHMIPYLSEYTQMFIVLFGAKVVVCDDTYNFQQFLEHKNNLNLFYKTFPPHIENAIPQILQHNIKIYLVNIDQLGWRNLNTVKKALSNKIKVIDYSSENISLTKDINHVHIPLLLYNDIIIRDNLEIKYDIGFSGGDFPRRSTILKQLSNKYNVININKFGKKRDILTKQCRIVLNIHAFDSLSTTETLRCYPLIYNKILTVSENTPLIESSTYGTEINKFIVFVDYDKIVSKCEEILSNYDQYYNSVFKDFDETKIKHMVDNHIETINQNIFN.

This is an uncharacterized protein from Acanthamoeba polyphaga mimivirus (APMV).